We begin with the raw amino-acid sequence, 162 residues long: Ribosome maturation factor RimP (162 aa).

Belongs to the RimP family.

The protein resides in the cytoplasm. Required for maturation of 30S ribosomal subunits. This Leptospira borgpetersenii serovar Hardjo-bovis (strain JB197) protein is Ribosome maturation factor RimP.